The primary structure comprises 481 residues: MSKPIRVRYAPSPTGLLHIGNARTALFNYLYARRHGGTFIIRIEDTDRKRHVEDGERSQLENLKWLGMDWDESPETHENYRQSERLALYQQYIDQLLAEGKAYKSYVTEEELAAERERQEAAGETPRYINEFIGMSADEKAKYIAEREAAGIVPTVRLAVNESGIYKWADMVKGDIEFEGGNIGGDWVIQKKDGYPTYNFAVVVDDHDMQISHVIRGDDHIANTPKQLMVYEALGWEAPEFGHMTLIINSETGKKLSKRDTNTLQFIEDYRKKGYMPEAVFNFIALLGWNPGGEEEIFSREQLIALFDENRLSKSPAAFDQKKMDWMSNEYLKHADFETVYALCKPFLEEAGRLTEKAEKLVELYKPQLKSADEIIPLTDLFFSDFPELTEAEKEVMAGETVSTVLQAFKAKLEAMSDEDFKPENIFPQIKAVQKETGIKGKNLFMPIRIAVSGEMHGPELPNTIYLLGRDKSIEHIKNML.

Positions 11 to 21 match the 'HIGH' region motif; it reads PSPTGLLHIGN. A 'KMSKS' region motif is present at residues 255-259; it reads KLSKR. Residue K258 coordinates ATP.

The protein belongs to the class-I aminoacyl-tRNA synthetase family. Glutamate--tRNA ligase type 1 subfamily. Monomer.

Its subcellular location is the cytoplasm. The catalysed reaction is tRNA(Glu) + L-glutamate + ATP = L-glutamyl-tRNA(Glu) + AMP + diphosphate. Its function is as follows. Catalyzes the attachment of glutamate to tRNA(Glu) in a two-step reaction: glutamate is first activated by ATP to form Glu-AMP and then transferred to the acceptor end of tRNA(Glu). The sequence is that of Glutamate--tRNA ligase from Streptococcus pyogenes serotype M3 (strain ATCC BAA-595 / MGAS315).